Consider the following 311-residue polypeptide: Sulfate adenylyltransferase subunit 2 (311 aa).

Belongs to the PAPS reductase family. CysD subfamily. In terms of assembly, heterodimer composed of CysD, the smaller subunit, and CysN.

The enzyme catalyses sulfate + ATP + H(+) = adenosine 5'-phosphosulfate + diphosphate. It participates in sulfur metabolism; hydrogen sulfide biosynthesis; sulfite from sulfate: step 1/3. Functionally, with CysN forms the ATP sulfurylase (ATPS) that catalyzes the adenylation of sulfate producing adenosine 5'-phosphosulfate (APS) and diphosphate, the first enzymatic step in sulfur assimilation pathway. APS synthesis involves the formation of a high-energy phosphoric-sulfuric acid anhydride bond driven by GTP hydrolysis by CysN coupled to ATP hydrolysis by CysD. This chain is Sulfate adenylyltransferase subunit 2, found in Methylobacterium sp. (strain 4-46).